The chain runs to 208 residues: NAD(P)H dehydrogenase (quinone) (208 aa).

Positions 4–192 (VLVLYYSSYG…DGARFQGRHV (189 aa)) constitute a Flavodoxin-like domain. FMN-binding positions include 10–15 (SSYGHV) and 78–80 (TRF). Residue Tyr-12 participates in NAD(+) binding. Trp-98 is a substrate binding site. FMN is bound by residues 113 to 119 (STGSQHG) and His-134. Residues 161-183 (YGASTLADDGDGGDRQPSANELD) are disordered.

This sequence belongs to the WrbA family. It depends on FMN as a cofactor.

The enzyme catalyses a quinone + NADH + H(+) = a quinol + NAD(+). It catalyses the reaction a quinone + NADPH + H(+) = a quinol + NADP(+). The polypeptide is NAD(P)H dehydrogenase (quinone) (Paracoccus denitrificans (strain Pd 1222)).